We begin with the raw amino-acid sequence, 373 residues long: 4-hydroxy-3-methylbut-2-en-1-yl diphosphate synthase (flavodoxin) (373 aa).

Cys270, Cys273, Cys305, and Glu312 together coordinate [4Fe-4S] cluster.

It belongs to the IspG family. It depends on [4Fe-4S] cluster as a cofactor.

It carries out the reaction (2E)-4-hydroxy-3-methylbut-2-enyl diphosphate + oxidized [flavodoxin] + H2O + 2 H(+) = 2-C-methyl-D-erythritol 2,4-cyclic diphosphate + reduced [flavodoxin]. Its pathway is isoprenoid biosynthesis; isopentenyl diphosphate biosynthesis via DXP pathway; isopentenyl diphosphate from 1-deoxy-D-xylulose 5-phosphate: step 5/6. Functionally, converts 2C-methyl-D-erythritol 2,4-cyclodiphosphate (ME-2,4cPP) into 1-hydroxy-2-methyl-2-(E)-butenyl 4-diphosphate. This Pectobacterium atrosepticum (strain SCRI 1043 / ATCC BAA-672) (Erwinia carotovora subsp. atroseptica) protein is 4-hydroxy-3-methylbut-2-en-1-yl diphosphate synthase (flavodoxin).